We begin with the raw amino-acid sequence, 121 residues long: Cell division protein FtsB (121 aa).

The Cytoplasmic portion of the chain corresponds to 1–6; it reads MRNWRW. Residues 7 to 24 traverse the membrane as a helical segment; that stretch reads LLLVLAVLLAWLQYRFWF. At 25-121 the chain is on the periplasmic side; it reads GPGNSGEVMM…PEPVDPVDHP (97 aa). A coiled-coil region spans residues 31 to 66; it reads EVMMLEAQVAHQTQDNEGLRQRNQALAAEVKDLKDG. The segment at 98–121 is disordered; it reads APASAEASAPAQQAPEPVDPVDHP. Low complexity predominate over residues 99-113; sequence PASAEASAPAQQAPE.

Belongs to the FtsB family. In terms of assembly, part of a complex composed of FtsB, FtsL and FtsQ.

It localises to the cell inner membrane. Functionally, essential cell division protein. May link together the upstream cell division proteins, which are predominantly cytoplasmic, with the downstream cell division proteins, which are predominantly periplasmic. The chain is Cell division protein FtsB from Xanthomonas axonopodis pv. citri (strain 306).